We begin with the raw amino-acid sequence, 85 residues long: Delta/kappa-theraphotoxin-Pm1a (85 aa).

A signal peptide spans 1-19; the sequence is MKTFVFIVLVALAFVLTAA. The propeptide occupies 20–43; the sequence is KEERANPSELVSALAELVMLDAER. Intrachain disulfides connect Cys50/Cys64, Cys57/Cys69, and Cys63/Cys77.

The protein belongs to the neurotoxin 10 (Hwtx-1) family. As to expression, expressed by the venom gland.

It is found in the secreted. Its function is as follows. Multimodal toxin that enhances nociceptor excitability mainly by the simultaneous stimulation of repetitive firing (through Nav1.8/SCN10A channel current enhancement) and impairment of repolarization (by inhibiting delayed rectifier current of Kv2.1/KCNB1), with a potential contribution from tetrodotoxin-sensitive voltage-gated sodium channels (Nav) modified excitability. Enhances Nav1.8/SCN10A currents (EC(50)=1.1 uM), modifies the channel gating by a right-shift in steady-state inactivation and delays open-state inactivation. Also decreases Kv2.1/KCNB1 currents (IC(50)=0.43 uM) and causes a depolarizing shift in the voltage dependence of activation without change in steady-state inactivation. In addition, inhibits peak currents of human sodium channels (Nav1.1 to Nav1.7, IC(50)=0.38-2.3 uM) and delays fast inactivation of Nav1.1/SCN1A, Nav1.3/SCN3A, Nav1.6/SCN8A, and Nav1.7/SCN9A. In small dorsal root ganglion neurons, induces hyperexcitability by enhancing tetrodotoxin-resistant sodium currents, impairing repolarization and lowering the threshold of action potential firing, consistent with the severe pain associated with envenomation. In vivo, elicits nocifensive behavior in mice after intraplantar injection. The chain is Delta/kappa-theraphotoxin-Pm1a from Pelinobius muticus (King baboon spider).